Reading from the N-terminus, the 530-residue chain is Probable histone-arginine methyltransferase CARMER (530 aa).

The 310-residue stretch at 141 to 450 (ASQYFQFYGY…QSYDVTIDLH (310 aa)) folds into the SAM-dependent MTase PRMT-type domain. S-adenosyl-L-methionine contacts are provided by Q154, R163, G187, E209, E238, and T266. At R501 the chain carries Asymmetric dimethylarginine; by autocatalysis.

This sequence belongs to the class I-like SAM-binding methyltransferase superfamily. Protein arginine N-methyltransferase family. In terms of assembly, homodimer. Interacts with EcR. The dimethylated protein is the major form. As to expression, present ubiquitously (at protein level). Expressed in the imaginal disks and in larval brains, and to a much lesser degree in the polytene larval tissue such as salivary glands.

Its subcellular location is the cytoplasm. The protein resides in the nucleus. It catalyses the reaction L-arginyl-[protein] + 2 S-adenosyl-L-methionine = N(omega),N(omega)-dimethyl-L-arginyl-[protein] + 2 S-adenosyl-L-homocysteine + 2 H(+). Its function is as follows. Methylates (mono- and asymmetric dimethylation) the guanidino nitrogens of arginyl residues in proteins. May methylate histone H3 at 'Arg-17' and activate transcription via chromatin remodeling. Coordinates ecdysone-mediated expression of cell death genes. The sequence is that of Probable histone-arginine methyltransferase CARMER (Art4) from Drosophila melanogaster (Fruit fly).